Here is a 424-residue protein sequence, read N- to C-terminus: Circumsporozoite protein (424 aa).

A signal peptide spans 1–18; sequence MMRKLAILSVSSFLFVEA. Positions 69-339 are disordered; sequence SRSLGENDDG…VKNNNNEEPS (271 aa). Over residues 85–106 the composition is skewed to basic and acidic residues; sequence NNREGKDEDKRDGNNEDNETLR. The segment at 104-111 is required for the binding to heparan sulfate proteoglycans (HSPGs) on the surface of host hepatocytes; sequence TLRKPKHK. The interval 112–116 is region I; contains the proteolytic cleavage site; it reads KLKQP. Low complexity predominate over residues 120-300; that stretch reads NPDPNANPNV…PNANPNANPN (181 aa). 44 repeat units span residues 123-126, 127-130, 131-134, 135-138, 139-142, 143-146, 147-150, 151-154, 155-158, 159-162, 163-166, 167-170, 171-174, 175-178, 179-182, 183-186, 187-190, 191-194, 195-198, 199-202, 203-206, 207-210, 211-214, 215-218, 219-222, 223-226, 227-230, 231-234, 235-238, 239-242, 243-246, 247-250, 251-254, 255-258, 259-262, 263-266, 267-270, 271-274, 275-278, 279-282, 283-286, 287-290, 291-294, and 295-298. The tract at residues 123–298 is 44 X 4 AA tandem repeats of P-N-[AV]-[ND]; that stretch reads PNANPNVDPN…ANPNANPNAN (176 aa). Positions 301-316 are enriched in polar residues; it reads KNNQGNGQGHNMPNDP. Over residues 322-336 the composition is skewed to low complexity; it reads ENANANNAVKNNNNE. Residues 349–402 form the TSP type-1 domain; it reads KIQNSLSTEWSPCSVTCGNGIQVRIKPGSANKPKDELDYENDIEKKICKMEKCS. Disulfide bonds link C361–C396 and C365–C401. T364 carries an O-linked (Fuc) threonine glycan. A lipid anchor (GPI-anchor amidated cysteine) is attached at C401. Positions 402–424 are cleaved as a propeptide — removed in mature form; that stretch reads SSVFNVVNSSIGLIMVLSFLFLN.

Belongs to the plasmodium circumsporozoite protein family. During host cell invasion, proteolytically cleaved at the cell membrane in the region I by a papain-like cysteine protease of parasite origin. Cleavage is triggered by the sporozoite contact with highly sulfated heparan sulfate proteoglycans (HSPGs) present on the host hepatocyte cell surface. Cleavage exposes the TSP type-1 (TSR) domain and is required for productive invasion of host hepatocytes but not for adhesion to the host cell membrane. Cleavage is dispensable for sporozoite development in the oocyst, motility and for traversal of host and vector cells. Post-translationally, O-glycosylated; maybe by POFUT2.

The protein resides in the cell membrane. Its subcellular location is the cytoplasm. Its function is as follows. Essential sporozoite protein. In the mosquito vector, required for sporozoite development in the oocyst, migration through the vector hemolymph and entry into the vector salivary glands. In the vertebrate host, required for sporozoite migration through the host dermis and infection of host hepatocytes. Binds to highly sulfated heparan sulfate proteoglycans (HSPGs) on the surface of host hepatocytes. In terms of biological role, in the vertebrate host, binds to highly sulfated heparan sulfate proteoglycans (HSPGs) on the surface of host hepatocytes and is required for sporozoite invasion of the host hepatocytes. This chain is Circumsporozoite protein, found in Plasmodium falciparum (isolate t4 / Thailand).